Reading from the N-terminus, the 241-residue chain is MSTVLTYIRAVDIYEHMTESLDLEFESAYRGESVAFGEGVRPPWSIGEPQPELAALIVQGKFRGDVLDVGCGEAAISLALAERGHTTVGLDLSPAAVELARHEAAKRGLANASFEVADASSFTGYDGRFDTIVDSTLFHSMPVESREGYLQSIVRAAAPGASYFVLVFDRAAIPEGPINAVTEDELRAAVSKYWIIDEIKPARLYARFPAGFAGMPALLDIREEPNGLQSIGGWLLSAHLG.

It belongs to the methyltransferase superfamily. Monomer.

The protein resides in the cytoplasm. It catalyses the reaction 2-heptyl-1-hydroxy-4(1H)-quinolinone + S-adenosyl-L-methionine = 2-heptyl-1-methoxy-4(1H)-quinolinone + S-adenosyl-L-homocysteine + H(+). In terms of biological role, involved in cellular response to chemical stress and may contribute to resistance toward antimicrobial natural compounds as well as drugs. Catalyzes the methylation and detoxification of the P.aeruginosa toxin 2-heptyl-1-hydroxy-4(1H)-quinolinone (HQNO) to 2-heptyl-1-methoxy-4(1H)-quinolinone (HMOQ). This Mycobacterium bovis (strain BCG / Pasteur 1173P2) protein is 2-heptyl-1-hydroxyquinolin-4(1H)-one methyltransferase.